The chain runs to 365 residues: MAKDYYKILGVDRNATDEEIKKAFRELAKKWHPDLHPENKQEAEEKFKEISEAYEVLSDPQKRRMYDQTGTVDFGAGGQNFNWDNFTHYSDLNDIFNDIFGGNFASDFFSGFGRGQREEQYDLDLYTNLDITLEDAYYGTEKRIKYRRNAMCPDCNGTGAKNGKLITCPTCNGTGQQRIVRGQGFFRMVTVTTCQTCGGRGRIPEEKCPRCNGTGTVVVNEDISVKIPKGATDNLRLRVQGKGQSYNGRTGDLYVVLRVRNDRNVQRINDDLMIDQKINFAQAALGDTIEVNLFREKYSLKIPEGTQPGEVLRIKGAGMPHLNGHGSGDLLVRVNVEVPKRLTQKQKDLIREIFDIKENHRSWFH.

In terms of domain architecture, J spans 4–70 (DYYKILGVDR…QKRRMYDQTG (67 aa)). A CR-type zinc finger spans residues 139 to 220 (GTEKRIKYRR…CNGTGTVVVN (82 aa)). The Zn(2+) site is built by C152, C155, C168, C171, C194, C197, C208, and C211. 4 CXXCXGXG motif repeats span residues 152-159 (CPDCNGTG), 168-175 (CPTCNGTG), 194-201 (CQTCGGRG), and 208-215 (CPRCNGTG).

It belongs to the DnaJ family. Homodimer. The cofactor is Zn(2+).

Its subcellular location is the cytoplasm. In terms of biological role, participates actively in the response to hyperosmotic and heat shock by preventing the aggregation of stress-denatured proteins and by disaggregating proteins, also in an autonomous, DnaK-independent fashion. Unfolded proteins bind initially to DnaJ; upon interaction with the DnaJ-bound protein, DnaK hydrolyzes its bound ATP, resulting in the formation of a stable complex. GrpE releases ADP from DnaK; ATP binding to DnaK triggers the release of the substrate protein, thus completing the reaction cycle. Several rounds of ATP-dependent interactions between DnaJ, DnaK and GrpE are required for fully efficient folding. Also involved, together with DnaK and GrpE, in the DNA replication of plasmids through activation of initiation proteins. In Thermoplasma acidophilum (strain ATCC 25905 / DSM 1728 / JCM 9062 / NBRC 15155 / AMRC-C165), this protein is Chaperone protein DnaJ.